The chain runs to 149 residues: D-aminoacyl-tRNA deacylase (149 aa).

The Gly-cisPro motif, important for rejection of L-amino acids signature appears at Gly-137–Pro-138.

Belongs to the DTD family. As to quaternary structure, homodimer.

The protein localises to the cytoplasm. The enzyme catalyses glycyl-tRNA(Ala) + H2O = tRNA(Ala) + glycine + H(+). The catalysed reaction is a D-aminoacyl-tRNA + H2O = a tRNA + a D-alpha-amino acid + H(+). An aminoacyl-tRNA editing enzyme that deacylates mischarged D-aminoacyl-tRNAs. Also deacylates mischarged glycyl-tRNA(Ala), protecting cells against glycine mischarging by AlaRS. Acts via tRNA-based rather than protein-based catalysis; rejects L-amino acids rather than detecting D-amino acids in the active site. By recycling D-aminoacyl-tRNA to D-amino acids and free tRNA molecules, this enzyme counteracts the toxicity associated with the formation of D-aminoacyl-tRNA entities in vivo and helps enforce protein L-homochirality. The chain is D-aminoacyl-tRNA deacylase from Clostridioides difficile (strain 630) (Peptoclostridium difficile).